We begin with the raw amino-acid sequence, 461 residues long: Ubiquinone hydroxylase UbiM (461 aa).

The protein belongs to the UbiH/COQ6 family. Requires FAD as cofactor.

It carries out the reaction a 2-(all-trans-polyprenyl)phenol + NADPH + O2 + H(+) = a 3-(all-trans-polyprenyl)benzene-1,2-diol + NADP(+) + H2O. The catalysed reaction is a 5-methoxy-2-methyl-3-(all-trans-polyprenyl)benzene-1,4-diol + AH2 + O2 = a 3-demethylubiquinol + A + H2O. It functions in the pathway cofactor biosynthesis; ubiquinone biosynthesis. Catalyzes the hydroxylation of three positions of the aromatic ring during ubiquinone biosynthesis. This is Ubiquinone hydroxylase UbiM from Neisseria meningitidis serogroup C / serotype 2a (strain ATCC 700532 / DSM 15464 / FAM18).